Consider the following 444-residue polypeptide: Glutamate--tRNA ligase 2 (444 aa).

Residues 8-18 (PSPTGHLHAGN) carry the 'HIGH' region motif. Residues 241–245 (KLSKR) carry the 'KMSKS' region motif. Lys-244 contributes to the ATP binding site.

It belongs to the class-I aminoacyl-tRNA synthetase family. Glutamate--tRNA ligase type 1 subfamily. As to quaternary structure, monomer.

It localises to the cytoplasm. The enzyme catalyses tRNA(Glu) + L-glutamate + ATP = L-glutamyl-tRNA(Glu) + AMP + diphosphate. Its function is as follows. Catalyzes the attachment of glutamate to tRNA(Glu) in a two-step reaction: glutamate is first activated by ATP to form Glu-AMP and then transferred to the acceptor end of tRNA(Glu). This is Glutamate--tRNA ligase 2 from Acidiphilium cryptum (strain JF-5).